A 453-amino-acid chain; its full sequence is Tubulin delta chain (453 aa).

143–149 (AGGTGSG) contacts GTP.

Belongs to the tubulin family. Found in a complex with TEDC1, TEDC2, TUBE1 and TUBD1.

It is found in the nucleus. The protein resides in the cytoplasm. The protein localises to the cytoskeleton. Its subcellular location is the microtubule organizing center. It localises to the centrosome. It is found in the centriole. The protein resides in the cell projection. The protein localises to the cilium. Functionally, acts as a positive regulator of hedgehog signaling and regulates ciliary function. The chain is Tubulin delta chain (TUBD1) from Homo sapiens (Human).